Reading from the N-terminus, the 216-residue chain is Probable nicotinate-nucleotide adenylyltransferase (216 aa).

Belongs to the NadD family.

The catalysed reaction is nicotinate beta-D-ribonucleotide + ATP + H(+) = deamido-NAD(+) + diphosphate. It participates in cofactor biosynthesis; NAD(+) biosynthesis; deamido-NAD(+) from nicotinate D-ribonucleotide: step 1/1. Functionally, catalyzes the reversible adenylation of nicotinate mononucleotide (NaMN) to nicotinic acid adenine dinucleotide (NaAD). This chain is Probable nicotinate-nucleotide adenylyltransferase, found in Shewanella baltica (strain OS223).